The chain runs to 343 residues: Serpentine receptor class alpha-11 (343 aa).

The Extracellular segment spans residues 1–24 (MSSPDTPVCASPQQMEMYNSHFYT). A helical membrane pass occupies residues 25-45 (CALFFNLLIAFTSMTLIIMAI). The Cytoplasmic segment spans residues 46-60 (RKLLTESIINTSTRM). The chain crosses the membrane as a helical span at residues 61 to 81 (FLIVGLLCCSLHQTAYIVLRV). Residues 82-106 (QVIFQILFKLDQPCKLYYKAYDCKY) are Extracellular-facing. The helical transmembrane segment at 107–127 (VTFSLVAGNTGMIFIQSAMTI) threads the bilayer. The Cytoplasmic segment spans residues 128 to 146 (DRILTTVFTNLWPKLKYWP). Residues 147-167 (GVILSSFMIGCNFTNVQFIFW) traverse the membrane as a helical segment. Over 168-192 (NDPLTDYVPTCGQFPPKSVGRFQKF) the chain is Extracellular. A helical membrane pass occupies residues 193 to 213 (LEIALYMSLAHMVINVIILYI). Residues 214 to 247 (NVVQDRRQRLVSTHDQSQSFDVNQRFQSRVALKS) are Cytoplasmic-facing. The helical transmembrane segment at 248 to 268 (TQAIFFLSMSQFLSCFLYTIF) threads the bilayer. Residues 269–291 (TKLYLTLQPDMTPLQSGLTLALT) are Extracellular-facing. Residues 292-312 (YTTPYACIAIPSLIMVTLTFI) traverse the membrane as a helical segment. Topologically, residues 313–343 (RNQRHRSINALRSQTETGDQYMQKIKKIWDK) are cytoplasmic.

This sequence belongs to the nematode receptor-like protein sra family.

It localises to the membrane. Its function is as follows. A G protein-coupled receptor required for olfactory imprinting a requisite in ordorant response such as benzaldehyde and isoamylalcohol. The chain is Serpentine receptor class alpha-11 from Caenorhabditis briggsae.